The sequence spans 121 residues: UPF0102 protein DehaBAV1_0707 (121 aa).

This sequence belongs to the UPF0102 family.

In Dehalococcoides mccartyi (strain ATCC BAA-2100 / JCM 16839 / KCTC 5957 / BAV1), this protein is UPF0102 protein DehaBAV1_0707.